The chain runs to 391 residues: Nutrient and stress factor 1 (391 aa).

Polar residues predominate over residues methionine 1–alanine 27. The interval methionine 1–arginine 37 is disordered. C2H2-type zinc fingers lie at residues phenylalanine 41 to histidine 66 and phenylalanine 72 to histidine 95. The segment at arginine 91–methionine 149 is disordered. The segment covering alanine 96–lysine 109 has biased composition (basic residues). The span at proline 110–serine 134 shows a compositional bias: low complexity. 2 positions are modified to phosphoserine: serine 162 and serine 163. A disordered region spans residues alanine 326–aspartate 374. Positions asparagine 332–asparagine 344 are enriched in low complexity. Positions lysine 353 to threonine 369 are enriched in basic and acidic residues.

It localises to the nucleus. Transcription factor that participates in the transcriptional activation of glucose-repressed genes during exponential growth in non-fermentable carbon conditions. Also involved in salt-stress response. The polypeptide is Nutrient and stress factor 1 (USV1) (Saccharomyces cerevisiae (strain ATCC 204508 / S288c) (Baker's yeast)).